We begin with the raw amino-acid sequence, 1374 residues long: DNA-directed RNA polymerase subunit beta (1374 aa).

Belongs to the RNA polymerase beta chain family. In terms of assembly, the RNAP catalytic core consists of 2 alpha, 1 beta, 1 beta' and 1 omega subunit. When a sigma factor is associated with the core the holoenzyme is formed, which can initiate transcription.

The enzyme catalyses RNA(n) + a ribonucleoside 5'-triphosphate = RNA(n+1) + diphosphate. In terms of biological role, DNA-dependent RNA polymerase catalyzes the transcription of DNA into RNA using the four ribonucleoside triphosphates as substrates. The polypeptide is DNA-directed RNA polymerase subunit beta (Rickettsia prowazekii (strain Madrid E)).